Reading from the N-terminus, the 121-residue chain is Large ribosomal subunit protein uL22 (121 aa).

It belongs to the universal ribosomal protein uL22 family. In terms of assembly, part of the 50S ribosomal subunit.

In terms of biological role, this protein binds specifically to 23S rRNA; its binding is stimulated by other ribosomal proteins, e.g. L4, L17, and L20. It is important during the early stages of 50S assembly. It makes multiple contacts with different domains of the 23S rRNA in the assembled 50S subunit and ribosome. Functionally, the globular domain of the protein is located near the polypeptide exit tunnel on the outside of the subunit, while an extended beta-hairpin is found that lines the wall of the exit tunnel in the center of the 70S ribosome. The chain is Large ribosomal subunit protein uL22 from Synechococcus sp. (strain WH7803).